The sequence spans 179 residues: MTRLKEKFLNEITPEMMKKFEYSSIMEVPKIEKIVVNMGIGDAVQNSKVLDSAVEELQAITGQKPMVTKAKKSIATFRLREGMPIGAKVTLRGERMYEFFDKLVNVSLPRVRDFRGISNKAFDGRGNYTLGVKEQLIFPEIDYDKVSKTRGMDIVIVTTANTDEEARELLTQFGMPFQK.

Belongs to the universal ribosomal protein uL5 family. In terms of assembly, part of the 50S ribosomal subunit; part of the 5S rRNA/L5/L18/L25 subcomplex. Contacts the 5S rRNA and the P site tRNA. Forms a bridge to the 30S subunit in the 70S ribosome.

This is one of the proteins that bind and probably mediate the attachment of the 5S RNA into the large ribosomal subunit, where it forms part of the central protuberance. In the 70S ribosome it contacts protein S13 of the 30S subunit (bridge B1b), connecting the 2 subunits; this bridge is implicated in subunit movement. Contacts the P site tRNA; the 5S rRNA and some of its associated proteins might help stabilize positioning of ribosome-bound tRNAs. The polypeptide is Large ribosomal subunit protein uL5 (Macrococcus caseolyticus (strain JCSC5402) (Macrococcoides caseolyticum)).